The sequence spans 101 residues: Phosphoprotein OPG062 (101 aa).

Residues 50–73 form a disordered region; the sequence is KPSSPTCERRPSSPSRCERMNNPG. Residues 56–68 show a composition bias toward basic and acidic residues; it reads CERRPSSPSRCER.

The protein belongs to the orthopoxvirus OPG062 family. Self-associates to form high molecular-weight forms. Interacts with protein OPG157. Interacts with host RICTOR and RPTOR; these interactions disrupt the mTORC1 and mTORC2 crosstalk.

The protein resides in the virion. Functionally, plays an essential role in virion assembly and morphogenesis. Also plays a role in the inhibition of host immune response by dysregulating mTOR. Sequesters host RICTOR and RPTOR, thereby disrupting mTORC1 and mTORC2 crosstalk. In turn, blocks the host antiviral response in part through mTOR-dependent degradation of cGAS, the primary poxvirus sensor. The protein is Phosphoprotein OPG062 (OPG062) of Monkeypox virus.